The following is a 150-amino-acid chain: Large ribosomal subunit protein bL9 (150 aa).

It belongs to the bacterial ribosomal protein bL9 family.

Its function is as follows. Binds to the 23S rRNA. The chain is Large ribosomal subunit protein bL9 from Alcanivorax borkumensis (strain ATCC 700651 / DSM 11573 / NCIMB 13689 / SK2).